We begin with the raw amino-acid sequence, 349 residues long: NADH-ubiquinone oxidoreductase chain 2 (349 aa).

The next 10 membrane-spanning stretches (helical) occupy residues proline 3 to serine 23, histidine 25 to alanine 45, alanine 66 to isoleucine 86, valine 98 to valine 118, isoleucine 149 to asparagine 171, isoleucine 178 to alanine 197, leucine 202 to leucine 219, leucine 240 to phenylalanine 260, glycine 274 to leucine 294, and phenylalanine 319 to leucine 339.

This sequence belongs to the complex I subunit 2 family.

It localises to the mitochondrion inner membrane. The catalysed reaction is a ubiquinone + NADH + 5 H(+)(in) = a ubiquinol + NAD(+) + 4 H(+)(out). Functionally, core subunit of the mitochondrial membrane respiratory chain NADH dehydrogenase (Complex I) that is believed to belong to the minimal assembly required for catalysis. Complex I functions in the transfer of electrons from NADH to the respiratory chain. The immediate electron acceptor for the enzyme is believed to be ubiquinone. The polypeptide is NADH-ubiquinone oxidoreductase chain 2 (MT-ND2) (Salmo salar (Atlantic salmon)).